Reading from the N-terminus, the 473-residue chain is Photosystem II CP43 reaction center protein (473 aa).

Positions 1–14 (MKTLYSLRRFYPVE) are excised as a propeptide. N-acetylthreonine is present on T15. T15 is modified (phosphothreonine). The next 5 membrane-spanning stretches (helical) occupy residues 69-93 (LFEVAHFVPEKPMYEQGLILLPHLA), 134-155 (LLGPETLEESFPFFGYVWKDRN), 178-200 (KALYFGGVYDTWAPGGGDVRRIT), 255-275 (KPFAWARRALVWSGEAYLSYS), and 291-312 (WFNNTAYPSEFYGPTGPEASQA). E367 lines the [CaMn4O5] cluster pocket. Residues 447–471 (RARAAAAGFEKGIDRDFEPVLSMTP) traverse the membrane as a helical segment.

The protein belongs to the PsbB/PsbC family. PsbC subfamily. In terms of assembly, PSII is composed of 1 copy each of membrane proteins PsbA, PsbB, PsbC, PsbD, PsbE, PsbF, PsbH, PsbI, PsbJ, PsbK, PsbL, PsbM, PsbT, PsbX, PsbY, PsbZ, Psb30/Ycf12, at least 3 peripheral proteins of the oxygen-evolving complex and a large number of cofactors. It forms dimeric complexes. It depends on Binds multiple chlorophylls and provides some of the ligands for the Ca-4Mn-5O cluster of the oxygen-evolving complex. It may also provide a ligand for a Cl- that is required for oxygen evolution. PSII binds additional chlorophylls, carotenoids and specific lipids. as a cofactor.

Its subcellular location is the plastid. It localises to the chloroplast thylakoid membrane. Its function is as follows. One of the components of the core complex of photosystem II (PSII). It binds chlorophyll and helps catalyze the primary light-induced photochemical processes of PSII. PSII is a light-driven water:plastoquinone oxidoreductase, using light energy to abstract electrons from H(2)O, generating O(2) and a proton gradient subsequently used for ATP formation. The protein is Photosystem II CP43 reaction center protein of Illicium oligandrum (Star anise).